A 235-amino-acid chain; its full sequence is Ribonuclease PH (235 aa).

Phosphate is bound by residues arginine 86 and 124–126 (GTR).

The protein belongs to the RNase PH family. Homohexameric ring arranged as a trimer of dimers.

The enzyme catalyses tRNA(n+1) + phosphate = tRNA(n) + a ribonucleoside 5'-diphosphate. Its function is as follows. Phosphorolytic 3'-5' exoribonuclease that plays an important role in tRNA 3'-end maturation. Removes nucleotide residues following the 3'-CCA terminus of tRNAs; can also add nucleotides to the ends of RNA molecules by using nucleoside diphosphates as substrates, but this may not be physiologically important. Probably plays a role in initiation of 16S rRNA degradation (leading to ribosome degradation) during starvation. In Legionella pneumophila (strain Paris), this protein is Ribonuclease PH.